Here is a 427-residue protein sequence, read N- to C-terminus: 3-phosphoshikimate 1-carboxyvinyltransferase (427 aa).

3-phosphoshikimate is bound by residues Lys-22, Ser-23, and Arg-27. Lys-22 is a phosphoenolpyruvate binding site. Residues Gly-96 and Arg-124 each coordinate phosphoenolpyruvate. The 3-phosphoshikimate site is built by Ser-169, Ser-170, Gln-171, Ser-197, Asp-313, Asn-336, and Lys-340. Residue Gln-171 coordinates phosphoenolpyruvate. Catalysis depends on Asp-313, which acts as the Proton acceptor. The phosphoenolpyruvate site is built by Arg-344, Arg-386, and Lys-411.

This sequence belongs to the EPSP synthase family. In terms of assembly, monomer.

The protein localises to the cytoplasm. It carries out the reaction 3-phosphoshikimate + phosphoenolpyruvate = 5-O-(1-carboxyvinyl)-3-phosphoshikimate + phosphate. It participates in metabolic intermediate biosynthesis; chorismate biosynthesis; chorismate from D-erythrose 4-phosphate and phosphoenolpyruvate: step 6/7. Its function is as follows. Catalyzes the transfer of the enolpyruvyl moiety of phosphoenolpyruvate (PEP) to the 5-hydroxyl of shikimate-3-phosphate (S3P) to produce enolpyruvyl shikimate-3-phosphate and inorganic phosphate. In Escherichia coli O6:H1 (strain CFT073 / ATCC 700928 / UPEC), this protein is 3-phosphoshikimate 1-carboxyvinyltransferase.